Here is a 33-residue protein sequence, read N- to C-terminus: Unknown 31.6 kDa protein from 2D-PAGE (33 aa).

The sequence is that of Unknown 31.6 kDa protein from 2D-PAGE from Onion yellows phytoplasma.